Reading from the N-terminus, the 592-residue chain is Polyadenylate-binding protein, cytoplasmic and nuclear (592 aa).

Over residues 1–10 (MSDITEKTAE) the composition is skewed to basic and acidic residues. Positions 1–43 (MSDITEKTAEQLENLQINDDQQPAQSASAPSTSASESEASSVS) are disordered. Polar residues predominate over residues 11–20 (QLENLQINDD). A compositionally biased stretch (low complexity) spans 21–43 (QQPAQSASAPSTSASESEASSVS). 4 RRM domains span residues 50-128 (ASLY…WSER), 138-215 (GNIF…MHVP), 231-308 (TNIY…RAQK), and 334-411 (VNLF…IAQR). Residues 507 to 586 (NQFPRHQQQH…ALAAYENFKK (80 aa)) enclose the PABC domain.

Belongs to the polyadenylate-binding protein type-1 family.

It is found in the cytoplasm. The protein resides in the nucleus. In terms of biological role, binds the poly(A) tail of mRNA. Appears to be an important mediator of the multiple roles of the poly(A) tail in mRNA biogenesis, stability and translation. In the nucleus, involved in both mRNA cleavage and polyadenylation. Is also required for efficient mRNA export to the cytoplasm. Acts in concert with a poly(A)-specific nuclease (PAN) to affect poly(A) tail shortening, which may occur concomitantly with either nucleocytoplasmic mRNA transport or translational initiation. In the cytoplasm, stimulates translation initiation and regulates mRNA decay through translation termination-coupled poly(A) shortening, probably mediated by PAN. This chain is Polyadenylate-binding protein, cytoplasmic and nuclear (PAB1), found in Kluyveromyces lactis (strain ATCC 8585 / CBS 2359 / DSM 70799 / NBRC 1267 / NRRL Y-1140 / WM37) (Yeast).